The following is a 342-amino-acid chain: S-adenosylmethionine:tRNA ribosyltransferase-isomerase (342 aa).

The protein belongs to the QueA family. Monomer.

The protein resides in the cytoplasm. The enzyme catalyses 7-aminomethyl-7-carbaguanosine(34) in tRNA + S-adenosyl-L-methionine = epoxyqueuosine(34) in tRNA + adenine + L-methionine + 2 H(+). The protein operates within tRNA modification; tRNA-queuosine biosynthesis. In terms of biological role, transfers and isomerizes the ribose moiety from AdoMet to the 7-aminomethyl group of 7-deazaguanine (preQ1-tRNA) to give epoxyqueuosine (oQ-tRNA). The chain is S-adenosylmethionine:tRNA ribosyltransferase-isomerase from Campylobacter jejuni subsp. jejuni serotype O:23/36 (strain 81-176).